A 541-amino-acid chain; its full sequence is Membrane protein insertase YidC (541 aa).

Helical transmembrane passes span 6–26, 326–346, 349–369, 420–440, 457–477, and 500–520; these read NLLLIGLLFVSFLLWQQWESD, VVDYGFLWWLAVPIHWILMFF, LVHNWGVAIILVTLTVRGLLY, GGCLPILLQMPIFIALYWVLL, LSVQDPYYVLPLLMGASMWAM, and MIFTVFFLWFPAGLVLYWLVG.

Belongs to the OXA1/ALB3/YidC family. Type 1 subfamily. Interacts with the Sec translocase complex via SecD. Specifically interacts with transmembrane segments of nascent integral membrane proteins during membrane integration.

The protein localises to the cell inner membrane. Functionally, required for the insertion and/or proper folding and/or complex formation of integral membrane proteins into the membrane. Involved in integration of membrane proteins that insert both dependently and independently of the Sec translocase complex, as well as at least some lipoproteins. Aids folding of multispanning membrane proteins. In Shewanella amazonensis (strain ATCC BAA-1098 / SB2B), this protein is Membrane protein insertase YidC.